The primary structure comprises 238 residues: RNA-free ribonuclease P (238 aa).

This sequence belongs to the HARP family.

It carries out the reaction Endonucleolytic cleavage of RNA, removing 5'-extranucleotides from tRNA precursor.. Its function is as follows. RNA-free RNase P that catalyzes the removal of the 5'-leader sequence from pre-tRNA to produce the mature 5'-terminus. This chain is RNA-free ribonuclease P, found in Hyperthermus butylicus (strain DSM 5456 / JCM 9403 / PLM1-5).